Here is a 66-residue protein sequence, read N- to C-terminus: MAFLKKSLFLVLFLGLVSLSICEEEKRETEEEENDQEEDDKSEEKRFLSLLPSLVSGAVSLVKILG.

A signal peptide spans 1–22 (MAFLKKSLFLVLFLGLVSLSIC). A propeptide spanning residues 23 to 44 (EEEKRETEEEENDQEEDDKSEE) is cleaved from the precursor. Residues 25–44 (EKRETEEEENDQEEDDKSEE) are disordered. Residues 30–41 (EEEENDQEEDDK) are compositionally biased toward acidic residues. Leu-65 carries the post-translational modification Leucine amide.

Expressed by the skin glands.

Its subcellular location is the secreted. In terms of biological role, has antimicrobial activity. The chain is Phylloseptin-H7 from Pithecopus hypochondrialis (Orange-legged leaf frog).